The chain runs to 955 residues: Glutamyl aminopeptidase (955 aa).

The Cytoplasmic portion of the chain corresponds to Met1–His17. A helical; Signal-anchor for type II membrane protein transmembrane segment spans residues Val18 to Leu38. The Extracellular portion of the chain corresponds to Gly39–Ala955. Residues Asn118 and Asn192 are each glycosylated (N-linked (GlcNAc...) asparagine). Residue Glu218 coordinates substrate. 2 N-linked (GlcNAc...) asparagine glycosylation sites follow: Asn319 and Asn335. Gly352–Asn356 lines the substrate pocket. Zn(2+) is bound at residue His388. Glu389 serves as the catalytic Proton acceptor. The Zn(2+) site is built by His392 and Glu411. N-linked (GlcNAc...) asparagine glycans are attached at residues Asn458, Asn547, Asn584, Asn592, Asn674, Asn759, Asn823, and Asn836. Arg882 lines the substrate pocket.

The protein belongs to the peptidase M1 family. In terms of assembly, homodimer; disulfide-linked. Zn(2+) is required as a cofactor. In terms of processing, N-glycosylated. Glycosylation counts for an increased mass of about 32% of the protein mass (about 48 kDa).

It is found in the cell membrane. It catalyses the reaction Release of N-terminal glutamate (and to a lesser extent aspartate) from a peptide.. Substrate specificity is modulated by calcium which enhances the enzymatic activity for cleavage of acidic residues while reducing its activity with neutral and basic residues. Hydrolytic activity is inhibited by the aminopeptidase inhibitor (Leu and acidic inhibitor) amastatin, but not by bestatin (aminopeptidase inhibitor Leu inhibitor), leupeptin, pepstatin A and PMSF. Its hydrolytic activity is also strongly reduced by zinc ions, with a complete inhibition at 0.5 mM, and moderately inhibited by cobalt and copper ions. In terms of biological role, venom protein that cleaves N-terminal acidic residues from peptides with high potency in presence of calcium. It may have several roles in venom including alteration of blood pressure by cleaving circulating angiotensin-2, general degradation of host tissue, increase of permeability to other venom components, and/or processing of other toxins in the venom. This is Glutamyl aminopeptidase from Bitis rhinoceros (West African gaboon viper).